A 236-amino-acid chain; its full sequence is Phospholipid hydroperoxide glutathione peroxidase, chloroplastic (236 aa).

The N-terminal 64 residues, 1 to 64 (MASMAFSTTF…SNFPIVPSKT (64 aa)), are a transit peptide targeting the chloroplast. C111 is an active-site residue.

It belongs to the glutathione peroxidase family.

It is found in the plastid. The protein localises to the chloroplast stroma. It catalyses the reaction a hydroperoxy polyunsaturated fatty acid + 2 glutathione = a hydroxy polyunsaturated fatty acid + glutathione disulfide + H2O. Functionally, protects cells and enzymes from oxidative damage, by catalyzing the reduction of hydrogen peroxide, lipid peroxides and organic hydroperoxide, by glutathione. In Pisum sativum (Garden pea), this protein is Phospholipid hydroperoxide glutathione peroxidase, chloroplastic.